Here is an 83-residue protein sequence, read N- to C-terminus: uncharacterized protein (83 aa).

This is an uncharacterized protein from Thermoproteus tenax (TTV1).